The following is a 397-amino-acid chain: Argininosuccinate synthase (397 aa).

Residue 9–17 (AYSGGLDTS) participates in ATP binding. L-citrulline is bound at residue Tyr87. Gly117 contributes to the ATP binding site. L-aspartate contacts are provided by Thr119, Asn123, and Asp124. Asn123 contributes to the L-citrulline binding site. L-citrulline-binding residues include Arg127, Ser175, Ser184, Glu257, and Tyr269.

It belongs to the argininosuccinate synthase family. Type 1 subfamily. As to quaternary structure, homotetramer.

The protein resides in the cytoplasm. It carries out the reaction L-citrulline + L-aspartate + ATP = 2-(N(omega)-L-arginino)succinate + AMP + diphosphate + H(+). Its pathway is amino-acid biosynthesis; L-arginine biosynthesis; L-arginine from L-ornithine and carbamoyl phosphate: step 2/3. The sequence is that of Argininosuccinate synthase from Dictyoglomus turgidum (strain DSM 6724 / Z-1310).